The primary structure comprises 989 residues: DNA-directed RNA polymerase subunit beta' (989 aa).

3 residues coordinate Mg(2+): D383, D385, and D387.

The protein belongs to the RNA polymerase beta' chain family. The RNAP catalytic core consists of 2 alpha, 1 beta, 1 beta' and 1 omega subunit. When a sigma factor is associated with the core the holoenzyme is formed, which can initiate transcription. The cofactor is Mg(2+).

It carries out the reaction RNA(n) + a ribonucleoside 5'-triphosphate = RNA(n+1) + diphosphate. In terms of biological role, DNA-dependent RNA polymerase catalyzes the transcription of DNA into RNA using the four ribonucleoside triphosphates as substrates. The polypeptide is DNA-directed RNA polymerase subunit beta' (rpoC) (Leuconostoc pseudomesenteroides).